A 224-amino-acid chain; its full sequence is Thymidylate kinase (224 aa).

Residue 13-20 (GGEGAGKS) coordinates ATP.

This sequence belongs to the thymidylate kinase family.

It carries out the reaction dTMP + ATP = dTDP + ADP. Phosphorylation of dTMP to form dTDP in both de novo and salvage pathways of dTTP synthesis. In Agrobacterium fabrum (strain C58 / ATCC 33970) (Agrobacterium tumefaciens (strain C58)), this protein is Thymidylate kinase.